Consider the following 423-residue polypeptide: CDP-diacylglycerol--serine O-phosphatidyltransferase 2 (423 aa).

Helical transmembrane passes span 38 to 58 (PHTISVLLVGACLLIWASGAL), 77 to 97 (WAMIAVFLAYCTLQAPSTILI), 103 to 123 (VWRLVHGLAVVYLVALAFLLF), 195 to 215 (LLLWVLSIGFELMELTFRHML), 222 to 242 (WWDSIILDILICNWFGIWAGM), 294 to 314 (FVQVLFLCVVFMTVELNTFFL), 319 to 339 (WIPPRNPLVVYRLILWWLIAI), 359 to 379 (GAFCWLSLAICIVELLICMKF), and 390 to 410 (TWLIIFWSSVGVALVVFLLAW).

This sequence belongs to the CDP-alcohol phosphatidyltransferase class-I family.

It is found in the endoplasmic reticulum membrane. It carries out the reaction a CDP-1,2-diacyl-sn-glycerol + L-serine = a 1,2-diacyl-sn-glycero-3-phospho-L-serine + CMP + H(+). It participates in phospholipid metabolism; phosphatidylethanolamine biosynthesis; phosphatidylethanolamine from CDP-diacylglycerol: step 1/2. Functionally, catalyzes a base-exchange reaction in which the polar head group of phosphatidylethanolamine (PE) or phosphatidylcholine (PC) is replaced by L-serine. The chain is CDP-diacylglycerol--serine O-phosphatidyltransferase 2 (PSS2) from Oryza sativa subsp. japonica (Rice).